Reading from the N-terminus, the 238-residue chain is Ion-translocating oxidoreductase complex subunit E (238 aa).

The next 6 helical transmembrane spans lie at 24 to 44, 52 to 72, 84 to 104, 106 to 126, 141 to 161, and 195 to 215; these read ALWQ…TLAV, LGMG…ISSM, VMIG…NAWM, ELYK…AVLG, ILDG…IGGI, and GILL…LLAA.

It belongs to the NqrDE/RnfAE family. The complex is composed of six subunits: RnfA, RnfB, RnfC, RnfD, RnfE and RnfG.

It localises to the cell inner membrane. Its function is as follows. Part of a membrane-bound complex that couples electron transfer with translocation of ions across the membrane. The sequence is that of Ion-translocating oxidoreductase complex subunit E from Azotobacter vinelandii (strain DJ / ATCC BAA-1303).